A 128-amino-acid chain; its full sequence is MGLMWGLFSVIIASVAQLSLGFAASHLPPMTHLWDFIAALLAFGLDARILLLGLLGYLLSVFCWYKTLHKLALSKAYALLSMSYVLVWIASMVLPGWEGTFSLKALLGVACIMSGLMLIFLPMTKQRY.

Topologically, residues 1-2 are cytoplasmic; sequence MG. Residues 3–23 traverse the membrane as a helical segment; it reads LMWGLFSVIIASVAQLSLGFA. Residues 24–35 are Periplasmic-facing; it reads ASHLPPMTHLWD. Residues 36 to 56 traverse the membrane as a helical segment; it reads FIAALLAFGLDARILLLGLLG. Over 57–76 the chain is Cytoplasmic; that stretch reads YLLSVFCWYKTLHKLALSKA. Residues 77–97 form a helical membrane-spanning segment; that stretch reads YALLSMSYVLVWIASMVLPGW. At 98-100 the chain is on the periplasmic side; sequence EGT. Residues 101-121 traverse the membrane as a helical segment; the sequence is FSLKALLGVACIMSGLMLIFL. Topologically, residues 122 to 128 are cytoplasmic; the sequence is PMTKQRY.

The protein belongs to the ArnF family. Heterodimer of ArnE and ArnF.

The protein resides in the cell inner membrane. Its pathway is bacterial outer membrane biogenesis; lipopolysaccharide biosynthesis. Translocates 4-amino-4-deoxy-L-arabinose-phosphoundecaprenol (alpha-L-Ara4N-phosphoundecaprenol) from the cytoplasmic to the periplasmic side of the inner membrane. The polypeptide is Probable 4-amino-4-deoxy-L-arabinose-phosphoundecaprenol flippase subunit ArnF (Escherichia coli (strain 55989 / EAEC)).